We begin with the raw amino-acid sequence, 494 residues long: Cardiolipin synthase (494 aa).

Transmembrane regions (helical) follow at residues 14-34 (IILNSIFIGAFILNLLFAFTI) and 45-65 (IWAWLLVLVFLPLFGFILYLL). 2 consecutive PLD phosphodiesterase domains span residues 229–256 (MNNRNHRKIVVIDGQIGYVGGFNVGDEY) and 407–434 (DNGFLHSKTLVIDDEIASVGTANMDHRS). Active-site residues include His-234, Lys-236, Asp-241, His-412, Lys-414, and Asp-419.

It belongs to the phospholipase D family. Cardiolipin synthase subfamily.

It localises to the cell membrane. It catalyses the reaction 2 a 1,2-diacyl-sn-glycero-3-phospho-(1'-sn-glycerol) = a cardiolipin + glycerol. Catalyzes the reversible phosphatidyl group transfer from one phosphatidylglycerol molecule to another to form cardiolipin (CL) (diphosphatidylglycerol) and glycerol. This is Cardiolipin synthase (cls) from Staphylococcus aureus (strain Mu50 / ATCC 700699).